A 744-amino-acid polypeptide reads, in one-letter code: Cell division cycle protein 27 homolog B (744 aa).

The TPR 1 repeat unit spans residues 101–134; that stretch reads AAGHYLLGLIYKYTDRRKNAAQQFKQSLTIDPLL. The segment covering 180 to 199 has biased composition (polar residues); the sequence is NEERNSTSTKNTSSEDYSPR. Disordered regions lie at residues 180–218 and 359–390; these read NEER…NFHS and ENMD…NDQE. Residues 363–374 show a composition bias toward basic and acidic residues; sequence EGVRGEPFDDSR. The segment covering 375–387 has biased composition (polar residues); the sequence is PNTASTTGSMASN. 7 TPR repeats span residues 450-483, 518-551, 553-585, 587-619, 621-653, 655-687, and 688-721; these read GWVL…SPYC, PQSW…NPRF, YAHT…DTRH, NAWY…NPSS, VIMS…DRKN, LPMY…APSE, and SSVY…KPPA.

This sequence belongs to the APC3/CDC27 family. The APC/C is composed of at least 10 subunits. Can homodimerize. Interacts with APC2, APC10, FZR2 and FZR3. Interacts with PANS1. Interacts with SAMBA. In terms of tissue distribution, specifically expressed in dividing and elongating cells.

It localises to the nucleus. The protein operates within protein modification; protein ubiquitination. Its function is as follows. Component of the anaphase promoting complex/cyclosome (APC/C), a cell cycle-regulated E3 ubiquitin-protein ligase complex that controls progression through mitosis and the G1 phase of the cell cycle. The APC/C complex controls several key steps in the cell cycle by mediating ubiquitination and subsequent degradation of target proteins such as cyclins. The APC/C complex is required for the female gametophyte development and is involved in several aspect of development by controlling cell division and cell elongation. Involved in the control of endoreduplication. Functionally redundant with CDC27A in the control of gametophyte development. This is Cell division cycle protein 27 homolog B (CDC27B) from Arabidopsis thaliana (Mouse-ear cress).